The following is a 399-amino-acid chain: Enoyl-[acyl-carrier-protein] reductase [NADH] (399 aa).

Residues 48 to 53, 74 to 75, 111 to 112, and 139 to 140 contribute to the NAD(+) site; these read GASTGY, FE, DA, and LA. Y225 is a substrate binding site. Residue Y235 is the Proton donor of the active site. NAD(+) is bound by residues K244 and 274 to 276; that span reads VVT.

The protein belongs to the TER reductase family. Monomer.

The catalysed reaction is a 2,3-saturated acyl-[ACP] + NAD(+) = a (2E)-enoyl-[ACP] + NADH + H(+). It participates in lipid metabolism; fatty acid biosynthesis. Involved in the final reduction of the elongation cycle of fatty acid synthesis (FAS II). Catalyzes the reduction of a carbon-carbon double bond in an enoyl moiety that is covalently linked to an acyl carrier protein (ACP). In Yersinia pseudotuberculosis serotype O:1b (strain IP 31758), this protein is Enoyl-[acyl-carrier-protein] reductase [NADH].